The sequence spans 520 residues: Cyclin-L2 (520 aa).

The residue at position 2 (alanine 2) is an N-acetylalanine. Cyclin-like regions lie at residues 83–185 and 198–282; these read ELIQ…RVLK and KIIV…KILQ. The tract at residues 316–520 is disordered; sequence LPGGTQVLDG…DHPGHSRHRR (205 aa). 4 positions are modified to phosphoserine: serine 330, serine 338, serine 348, and serine 351. Positions 357–367 are enriched in basic and acidic residues; it reads RRLEGAKKAKA. A Phosphoserine modification is found at serine 369. A compositionally biased stretch (basic and acidic residues) spans 376–390; sequence KGRESRSRSRSREQS. The tract at residues 385–423 is RS; sequence RSREQSYSRSPSRSASPKRRKSDSGSTSGGSKSQSRSRS. Low complexity predominate over residues 408–436; it reads SGSTSGGSKSQSRSRSRSDSPPRQAPRSA. Residues 441 to 454 are compositionally biased toward basic and acidic residues; that stretch reads SEIRGSRKSKDCKY. Residues 456–471 show a composition bias toward basic residues; that stretch reads QKPHKSRSRSSSRSRS. Composition is skewed to basic and acidic residues over residues 472–481 and 489–514; these read RSRERADNPG and YYRD…DHPG.

The protein belongs to the cyclin family. Cyclin L subfamily. As to quaternary structure, interacts with CDK11A, CDK11B, CDK12, CDK13 and POLR2A, the hyperphosphorylated C-terminal domain (CTD) of RNA polymerase II. May form a ternary complex with CDK11B and casein kinase II (CKII). Interacts with pre-mRNA-splicing factors, including at least SRSF1, SRSF2 AND SRSF7/SLU7. As to expression, widely expressed.

It is found in the nucleus speckle. Its subcellular location is the nucleus. The protein localises to the nucleoplasm. Functionally, involved in pre-mRNA splicing. May induce cell death, possibly by acting on the transcription and RNA processing of apoptosis-related factors. The polypeptide is Cyclin-L2 (CCNL2) (Homo sapiens (Human)).